A 676-amino-acid polypeptide reads, in one-letter code: DNA ligase (676 aa).

NAD(+) is bound by residues 35–39 (DAVYD), 84–85 (SL), and glutamate 115. The N6-AMP-lysine intermediate role is filled by lysine 117. Positions 138, 177, 296, and 320 each coordinate NAD(+). Zn(2+) is bound by residues cysteine 414, cysteine 417, cysteine 432, and cysteine 437. Residues 599–676 (NANLKLVGKT…SEAELLKILA (78 aa)) enclose the BRCT domain.

This sequence belongs to the NAD-dependent DNA ligase family. LigA subfamily. Mg(2+) serves as cofactor. It depends on Mn(2+) as a cofactor.

The enzyme catalyses NAD(+) + (deoxyribonucleotide)n-3'-hydroxyl + 5'-phospho-(deoxyribonucleotide)m = (deoxyribonucleotide)n+m + AMP + beta-nicotinamide D-nucleotide.. Its function is as follows. DNA ligase that catalyzes the formation of phosphodiester linkages between 5'-phosphoryl and 3'-hydroxyl groups in double-stranded DNA using NAD as a coenzyme and as the energy source for the reaction. It is essential for DNA replication and repair of damaged DNA. This is DNA ligase from Trichormus variabilis (strain ATCC 29413 / PCC 7937) (Anabaena variabilis).